A 139-amino-acid polypeptide reads, in one-letter code: Maximins 4/H3 type 5 (139 aa).

The signal sequence occupies residues 1-18 (MNFKYIFAVSFLIASAYA). Residues 19–43 (RSVQNDEQSLSQRDVLEEESLREIR) constitute a propeptide that is removed on maturation. Asparagine 70 bears the Asparagine amide mark. A propeptide spanning residues 74–118 (TAEEHEVMKRLEAVMRDLDSLDHPEEASERETRGFNQDEIAKEKR) is cleaved from the precursor. Isoleucine 138 carries the isoleucine amide modification.

The protein belongs to the bombinin family. As to expression, expressed by the skin glands.

The protein localises to the secreted. In terms of biological role, maximin-4 shows antibacterial activity against both Gram-positive and Gram-negative bacteria. It also shows antimicrobial activity against the fungus C.albicans, but not against A.flavus nor P.uticale. It has little hemolytic activity. It does not possess a significant cytotoxicity against tumor cell lines. It does not possess a significant anti-HIV activity. Maximin-H3 shows antibacterial activity against both Gram-positive and Gram-negative bacteria. It also shows antimicrobial activity against the fungus C.albicans. Shows strong hemolytic activity. The sequence is that of Maximins 4/H3 type 5 from Bombina maxima (Giant fire-bellied toad).